Here is a 160-residue protein sequence, read N- to C-terminus: Major strawberry allergen Fra a 1-D (160 aa).

The protein belongs to the BetVI family. As to quaternary structure, monomer.

The sequence is that of Major strawberry allergen Fra a 1-D from Fragaria ananassa (Strawberry).